Reading from the N-terminus, the 332-residue chain is Holliday junction branch migration complex subunit RuvB (332 aa).

A large ATPase domain (RuvB-L) region spans residues methionine 1–tyrosine 182. Residues leucine 21, arginine 22, glycine 63, lysine 66, threonine 67, threonine 68, glutamate 129–phenylalanine 131, arginine 172, tyrosine 182, and arginine 219 contribute to the ATP site. A Mg(2+)-binding site is contributed by threonine 67. The interval aspartate 183 to serine 253 is small ATPAse domain (RuvB-S). The interval glutamate 256 to arginine 332 is head domain (RuvB-H). The DNA site is built by arginine 311 and arginine 316.

This sequence belongs to the RuvB family. Homohexamer. Forms an RuvA(8)-RuvB(12)-Holliday junction (HJ) complex. HJ DNA is sandwiched between 2 RuvA tetramers; dsDNA enters through RuvA and exits via RuvB. An RuvB hexamer assembles on each DNA strand where it exits the tetramer. Each RuvB hexamer is contacted by two RuvA subunits (via domain III) on 2 adjacent RuvB subunits; this complex drives branch migration. In the full resolvosome a probable DNA-RuvA(4)-RuvB(12)-RuvC(2) complex forms which resolves the HJ.

The protein resides in the cytoplasm. It carries out the reaction ATP + H2O = ADP + phosphate + H(+). In terms of biological role, the RuvA-RuvB-RuvC complex processes Holliday junction (HJ) DNA during genetic recombination and DNA repair, while the RuvA-RuvB complex plays an important role in the rescue of blocked DNA replication forks via replication fork reversal (RFR). RuvA specifically binds to HJ cruciform DNA, conferring on it an open structure. The RuvB hexamer acts as an ATP-dependent pump, pulling dsDNA into and through the RuvAB complex. RuvB forms 2 homohexamers on either side of HJ DNA bound by 1 or 2 RuvA tetramers; 4 subunits per hexamer contact DNA at a time. Coordinated motions by a converter formed by DNA-disengaged RuvB subunits stimulates ATP hydrolysis and nucleotide exchange. Immobilization of the converter enables RuvB to convert the ATP-contained energy into a lever motion, pulling 2 nucleotides of DNA out of the RuvA tetramer per ATP hydrolyzed, thus driving DNA branch migration. The RuvB motors rotate together with the DNA substrate, which together with the progressing nucleotide cycle form the mechanistic basis for DNA recombination by continuous HJ branch migration. Branch migration allows RuvC to scan DNA until it finds its consensus sequence, where it cleaves and resolves cruciform DNA. This Protochlamydia amoebophila (strain UWE25) protein is Holliday junction branch migration complex subunit RuvB.